An 83-amino-acid polypeptide reads, in one-letter code: Normal mucosa of esophagus-specific gene 1 protein (83 aa).

The protein belongs to the complex I NDUFA4 subunit family. In terms of tissue distribution, expressed mainly in stomach, placenta, small intestine and colon, as well as in normal mucosa of esophagus. Down-regulated in esophageal squamous cell carcinoma.

The protein resides in the nucleus. This is Normal mucosa of esophagus-specific gene 1 protein (NMES1) from Homo sapiens (Human).